The sequence spans 396 residues: Dimethyladenosine transferase 2, mitochondrial (396 aa).

A mitochondrion-targeting transit peptide spans 1–43 (MRGPAMRLPPRIALSALARGPSCILGSGAATRKDWQTRNRRGF). The tract at residues 43-71 (FSDFNIEPLPDSDLEESSPWTSRNRSEPT) is disordered. The S-adenosyl-L-methionine site is built by isoleucine 74, glutamate 123, and aspartate 149. The DNA-binding stretch occupies residues 328–329 (KR).

It belongs to the class I-like SAM-binding methyltransferase superfamily. rRNA adenine N(6)-methyltransferase family. KsgA subfamily. As to quaternary structure, homodimer. Component of the mitochondrial transcription initiation complex, composed at least of TFB2M, TFAM and POLRMT. In this complex TFAM recruits POLRMT to the promoter whereas TFB2M induces structural changes in POLRMT to enable promoter opening and trapping of the DNA non-template strand. Interacts with mitochondrial RNA polymerase POLRMT. Interacts with TFAM. In terms of tissue distribution, ubiquitously expressed.

The protein localises to the mitochondrion. It catalyses the reaction adenosine in rRNA + S-adenosyl-L-methionine = N(6)-methyladenosine in rRNA + S-adenosyl-L-homocysteine + H(+). S-adenosyl-L-methionine-dependent rRNA methyltransferase which may methylate two specific adjacent adenosines in the loop of a conserved hairpin near the 3'-end of 12S mitochondrial rRNA. Component of the mitochondrial transcription initiation complex, composed at least of TFB2M, TFAM and POLRMT that is required for basal transcription of mitochondrial DNA. In this complex, TFAM recruits POLRMT to a specific promoter whereas TFB2M induces structural changes in POLRMT to enable promoter opening and trapping of the DNA non-template strand. Stimulates transcription independently of the methyltransferase activity. The chain is Dimethyladenosine transferase 2, mitochondrial from Mus musculus (Mouse).